Reading from the N-terminus, the 606-residue chain is Anthranilate synthase alpha subunit 2, chloroplastic (606 aa).

The N-terminal 49 residues, 1–49 (MESIAAATFTPSRLAARPATPAAAAAPVRARAAVAAGGRRRTSRRGGVR), are a transit peptide targeting the chloroplast.

The protein belongs to the anthranilate synthase component I family. As to quaternary structure, heterotetramer consisting of two non-identical subunits: a beta subunit and a large alpha subunit.

It is found in the plastid. The protein localises to the chloroplast. The catalysed reaction is chorismate + L-glutamine = anthranilate + pyruvate + L-glutamate + H(+). It functions in the pathway amino-acid biosynthesis; L-tryptophan biosynthesis; L-tryptophan from chorismate: step 1/5. With respect to regulation, feedback inhibition by tryptophan. Its function is as follows. Part of a heterotetrameric complex that catalyzes the two-step biosynthesis of anthranilate, an intermediate in the biosynthesis of L-tryptophan. In the first step, the glutamine-binding beta subunit of anthranilate synthase (AS) provides the glutamine amidotransferase activity which generates ammonia as a substrate that, along with chorismate, is used in the second step, catalyzed by the large alpha subunit of AS to produce anthranilate. The chain is Anthranilate synthase alpha subunit 2, chloroplastic from Oryza sativa subsp. japonica (Rice).